The following is a 145-amino-acid chain: MSRASLSLLDLAGVKPYQMKKDEEYMNEEQILHFRKILNAWHEQIVEEASRTVAHMQDEVTNFPDPADRATQEEEFSLELRNRDRERKLMKKIEATLKKLDTDDFGYCDCCGEEIGIRRLEARPTADLCIDCKTLAEIREKQVAG.

Zn(2+)-binding residues include Cys-108, Cys-111, Cys-129, and Cys-132. The dksA C4-type zinc-finger motif lies at 108-132; the sequence is CDCCGEEIGIRRLEARPTADLCIDC.

The protein belongs to the DksA family. In terms of assembly, interacts directly with the RNA polymerase.

It is found in the cytoplasm. Transcription factor that acts by binding directly to the RNA polymerase (RNAP). Required for negative regulation of rRNA expression and positive regulation of several amino acid biosynthesis promoters. Also required for regulation of fis expression. The chain is RNA polymerase-binding transcription factor DksA from Haemophilus influenzae (strain ATCC 51907 / DSM 11121 / KW20 / Rd).